We begin with the raw amino-acid sequence, 94 residues long: Co-chaperonin GroES (94 aa).

Belongs to the GroES chaperonin family. In terms of assembly, heptamer of 7 subunits arranged in a ring. Interacts with the chaperonin GroEL.

Its subcellular location is the cytoplasm. In terms of biological role, together with the chaperonin GroEL, plays an essential role in assisting protein folding. The GroEL-GroES system forms a nano-cage that allows encapsulation of the non-native substrate proteins and provides a physical environment optimized to promote and accelerate protein folding. GroES binds to the apical surface of the GroEL ring, thereby capping the opening of the GroEL channel. The chain is Co-chaperonin GroES from Lactobacillus gasseri (strain ATCC 33323 / DSM 20243 / BCRC 14619 / CIP 102991 / JCM 1131 / KCTC 3163 / NCIMB 11718 / NCTC 13722 / AM63).